We begin with the raw amino-acid sequence, 703 residues long: Prolyl 3-hydroxylase 2 (703 aa).

A signal peptide spans 1-21; the sequence is MRESTWVSLLLLLLLPTPQRG. The tract at residues 17–40 is disordered; the sequence is TPQRGGPQDGRRSPEPEPERGPLQ. Over residues 25–36 the composition is skewed to basic and acidic residues; that stretch reads DGRRSPEPEPER. TPR repeat units lie at residues 42-75, 144-177, 205-238, and 301-334; these read FDLLYASGVAAYYSGDYERAVRDLEAALSSHRRL, RVPYNYLQRAYIKLNQLEKAMEAAHTFFMANPEH, HLESYNAGVKHYEADDFESAIKYFEQALREYFNE, and PLHYDYLQFAYYRVGEYVKALECAKAYLMFHPDN. Asn-444 and Asn-544 each carry an N-linked (GlcNAc...) asparagine glycan. Residues 552 to 666 form the Fe2OG dioxygenase domain; sequence THMVCRTALS…RCAVALWFTL (115 aa). Fe cation is bound by residues His-575, Asp-577, and His-647. Residue Arg-657 is part of the active site. The Prevents secretion from ER signature appears at 700-703; the sequence is KDEL.

It belongs to the leprecan family. Fe cation serves as cofactor. It depends on L-ascorbate as a cofactor. Detected in kidney. Detected on kidney tubular cells, pancreas acinar cells, Schwann cells of the peripheral nerve in the pinna, and in tunica adventitia, the smooth muscle layer of the aortic wall (at protein level). Detected in lung, skeletal muscle and kidney. Detected in kidney glomeruli and in prehypertrophic regions of long bone from neonates. In the eye, detected in the epithelial layer of the cornea and at lower levels in the sclera at the posterior end of the eye.

The protein resides in the endoplasmic reticulum. It localises to the sarcoplasmic reticulum. The protein localises to the golgi apparatus. The catalysed reaction is L-prolyl-[collagen] + 2-oxoglutarate + O2 = trans-3-hydroxy-L-prolyl-[collagen] + succinate + CO2. Functionally, prolyl 3-hydroxylase that catalyzes the post-translational formation of 3-hydroxyproline on collagens. Contributes to proline 3-hydroxylation of collagen COL4A1 and COL1A1 in tendons, the eye sclera and in the eye lens capsule. Has high activity with the type IV collagen COL4A1, and lower activity with COL1A1. Catalyzes hydroxylation of the first Pro in Gly-Pro-Hyp sequences where Hyp is 4-hydroxyproline. Has no activity on substrates that have proline instead of 4-hydroxyproline in the third position. This is Prolyl 3-hydroxylase 2 from Mus musculus (Mouse).